A 512-amino-acid chain; its full sequence is Sucrose-6-phosphate hydrolase (512 aa).

Residues 40 to 43 (WMND), glutamine 59, tryptophan 67, 102 to 103 (FS), 165 to 166 (RD), glutamate 229, and tryptophan 311 contribute to the substrate site. Aspartate 43 is an active-site residue.

It belongs to the glycosyl hydrolase 32 family.

It localises to the cytoplasm. The catalysed reaction is Hydrolysis of terminal non-reducing beta-D-fructofuranoside residues in beta-D-fructofuranosides.. The protein operates within glycan biosynthesis; sucrose metabolism. In Zymomonas mobilis subsp. mobilis (strain ATCC 31821 / ZM4 / CP4), this protein is Sucrose-6-phosphate hydrolase (sacA).